Consider the following 596-residue polypeptide: Arginine--tRNA ligase (596 aa).

Residues 135–145 carry the 'HIGH' region motif; the sequence is ANPTGPIHIGG. The interval 227 to 249 is disordered; it reads PRVDGGADQDGNPLGEGDSEQRE.

Belongs to the class-I aminoacyl-tRNA synthetase family. In terms of assembly, monomer.

It is found in the cytoplasm. The catalysed reaction is tRNA(Arg) + L-arginine + ATP = L-arginyl-tRNA(Arg) + AMP + diphosphate. The polypeptide is Arginine--tRNA ligase (Bifidobacterium adolescentis (strain ATCC 15703 / DSM 20083 / NCTC 11814 / E194a)).